The following is a 231-amino-acid chain: Large ribosomal subunit protein uL1 (231 aa).

This sequence belongs to the universal ribosomal protein uL1 family. In terms of assembly, part of the 50S ribosomal subunit.

Functionally, binds directly to 23S rRNA. The L1 stalk is quite mobile in the ribosome, and is involved in E site tRNA release. Its function is as follows. Protein L1 is also a translational repressor protein, it controls the translation of the L11 operon by binding to its mRNA. This chain is Large ribosomal subunit protein uL1, found in Macrococcus caseolyticus (strain JCSC5402) (Macrococcoides caseolyticum).